The following is a 715-amino-acid chain: D-ribulokinase YDR109C (715 aa).

The disordered stretch occupies residues 1-27 (MKSRKRQNNMQNETREPAVLSSQETSI).

This sequence belongs to the FGGY kinase family.

The catalysed reaction is D-ribulose + ATP = D-ribulose 5-phosphate + ADP + H(+). The protein operates within carbohydrate metabolism; pentose and glucuronate interconversion. In terms of biological role, catalyzes ATP-dependent phosphorylation of D-ribulose at C-5 to form D-ribulose 5-phosphate. Postulated to function in a metabolite repair mechanism by preventing toxic accumulation of free D-ribulose formed by non-specific phosphatase activities. Alternatively, may play a role in regulating D-ribulose 5-phosphate recycling in the pentose phosphate pathway. The protein is D-ribulokinase YDR109C of Saccharomyces cerevisiae (strain ATCC 204508 / S288c) (Baker's yeast).